A 516-amino-acid polypeptide reads, in one-letter code: Protein phosphatase 1H (516 aa).

Disordered stretches follow at residues 102–122 (ADPSSVSYTPSRRRSSLPSGD) and 181–202 (PPTCLGEESPNPQLHASASGSQ). Positions 106 to 506 (SVSYTPSRRR…DDISVFIIPL (401 aa)) constitute a PPM-type phosphatase domain. Residues 190–202 (PNPQLHASASGSQ) show a composition bias toward polar residues.

This sequence belongs to the PP2C family.

It is found in the nucleus. The protein localises to the cytoplasm. The enzyme catalyses O-phospho-L-seryl-[protein] + H2O = L-seryl-[protein] + phosphate. It carries out the reaction O-phospho-L-threonyl-[protein] + H2O = L-threonyl-[protein] + phosphate. The protein is Protein phosphatase 1H (ppm1h) of Danio rerio (Zebrafish).